Here is a 314-residue protein sequence, read N- to C-terminus: L-lactate dehydrogenase (314 aa).

NAD(+) contacts are provided by residues Val-17, Asp-38, Lys-43, Tyr-69, and 83 to 84 (GA). Substrate contacts are provided by Gln-86 and Arg-92. NAD(+) contacts are provided by residues Ser-105, 122-124 (ASN), and Ser-147. 124-127 (NPVD) contributes to the substrate binding site. Residue 152–155 (DSAR) participates in substrate binding. 2 residues coordinate beta-D-fructose 1,6-bisphosphate: Arg-157 and His-172. The active-site Proton acceptor is the His-179. Tyr-223 is modified (phosphotyrosine). Residue Thr-232 coordinates substrate.

Belongs to the LDH/MDH superfamily. LDH family. In terms of assembly, homotetramer.

The protein resides in the cytoplasm. It catalyses the reaction (S)-lactate + NAD(+) = pyruvate + NADH + H(+). Its pathway is fermentation; pyruvate fermentation to lactate; (S)-lactate from pyruvate: step 1/1. Allosterically activated by fructose 1,6-bisphosphate (FBP). Functionally, catalyzes the conversion of lactate to pyruvate. The protein is L-lactate dehydrogenase of Corynebacterium glutamicum (strain ATCC 13032 / DSM 20300 / JCM 1318 / BCRC 11384 / CCUG 27702 / LMG 3730 / NBRC 12168 / NCIMB 10025 / NRRL B-2784 / 534).